The primary structure comprises 77 residues: UPF0401 protein ECP_3853 (77 aa).

The protein belongs to the UPF0401 family.

This is UPF0401 protein ECP_3853 from Escherichia coli O6:K15:H31 (strain 536 / UPEC).